The chain runs to 116 residues: AHLHALYLVHHEVWRPLAAAYQHQLDRPIVPHPFRLGDTVWVRRHQTNNLQPRWKAPYTVLLTTPTALKVDGIAAWIHAAHVKAATTPPAGTASGPTWKVQRSQNPLKIRLTRGAP.

In terms of biological role, catalyzes viral DNA integration into the host chromosome, by performing a series of DNA cutting and joining reactions. This is Pol polyprotein (pol) from Mus musculus (Mouse).